A 378-amino-acid polypeptide reads, in one-letter code: Filamin-binding LIM protein 1 (378 aa).

A filamin-binding region spans residues Met-1–Ala-69. A disordered region spans residues Trp-38 to Pro-179. Positions Leu-103 to Pro-115 are enriched in pro residues. LIM zinc-binding domains follow at residues Asp-186–Lys-247, Cys-248–Ala-305, and Pro-306–Ala-375. Positions Ile-281–Cys-378 are PLEKHC1-binding.

As to quaternary structure, interacts with PLEKHC1, FLNA, FLNB and FLNC. Interacts with NKX2-5.

It is found in the cell junction. It localises to the focal adhesion. The protein resides in the cytoplasm. The protein localises to the cytoskeleton. Its subcellular location is the stress fiber. Its function is as follows. Serves as an anchoring site for cell-ECM adhesion proteins and filamin-containing actin filaments. Is implicated in cell shape modulation (spreading) and motility. May participate in the regulation of filamin-mediated cross-linking and stabilization of actin filaments. May also regulate the assembly of filamin-containing signaling complexes that control actin assembly. Promotes dissociation of FLNA from ITGB3 and ITGB7. Promotes activation of integrins and regulates integrin-mediated cell-cell adhesion. The polypeptide is Filamin-binding LIM protein 1 (FBLIM1) (Bos taurus (Bovine)).